The primary structure comprises 468 residues: Nicotinamide phosphoribosyltransferase (468 aa).

R180 serves as a coordination point for diphosphate. Residue D203 coordinates beta-nicotinamide D-ribonucleotide. Diphosphate is bound by residues H229 and R293. At H229 the chain carries Phosphohistidine; by autocatalysis. Residues D335 and R373 each coordinate beta-nicotinamide D-ribonucleotide.

The protein belongs to the NAPRTase family. In terms of assembly, homodimer. The dimeric structure consists of two protomers arranged head to tail, with domain A on one protomer interacting with domain B on the other protomer. Post-translationally, phosphorylation at His-229 plays a crucial role in enhancing the substrate affinity and is important for maintaining enzymatic activity.

It catalyses the reaction beta-nicotinamide D-ribonucleotide + diphosphate = 5-phospho-alpha-D-ribose 1-diphosphate + nicotinamide + H(+). It participates in cofactor biosynthesis; NAD(+) biosynthesis; nicotinamide D-ribonucleotide from 5-phospho-alpha-D-ribose 1-diphosphate and nicotinamide: step 1/1. Its activity is regulated as follows. ATP-dependent autophosphorylation plays a vital role in nicotinamide binding and enzyme activation. Activity is inhibited by FK866. In terms of biological role, catalyzes the condensation of nicotinamide with 5-phosphoribosyl-1-pyrophosphate to yield nicotinamide mononucleotide, an intermediate in the biosynthesis of NAD. Plays an important role in the biosynthesis of NAD via the nicotinamide (NAM) salvage pathway. Is also capable of hydrolyzing ATP and shows ATP-dependent autophosphorylation activity. The sequence is that of Nicotinamide phosphoribosyltransferase from Xanthomonas campestris pv. campestris (strain 8004).